Consider the following 169-residue polypeptide: uncharacterized protein (169 aa).

This is an uncharacterized protein from Haemophilus influenzae (strain ATCC 51907 / DSM 11121 / KW20 / Rd).